A 271-amino-acid chain; its full sequence is RELT-like protein 1 (271 aa).

Residues 1–23 form the signal peptide; sequence MAPRALPGSAVLAAAVFVGGAVS. Residues 24–57 are Extracellular-facing; the sequence is SPLVAPDNGSSRTLHSRTETTPSPSNDTGNGHPE. The segment at 28–53 is disordered; the sequence is APDNGSSRTLHSRTETTPSPSNDTGN. N-linked (GlcNAc...) asparagine glycosylation is found at Asn31 and Asn49. Polar residues predominate over residues 31 to 52; it reads NGSSRTLHSRTETTPSPSNDTG. Residues 58 to 78 traverse the membrane as a helical segment; sequence YIAYALVPVFFIMGLFGVLIC. Over 79–271 the chain is Cytoplasmic; it reads HLLKKKGYRC…PVKRERSGTE (193 aa). The stretch at 89–113 forms a coiled coil; that stretch reads TTEAEQDIEEEKVEKIELNDSVNEN. Residues Ser109 and Ser114 each carry the phosphoserine modification. Disordered stretches follow at residues 145 to 173 and 233 to 271; these read DPES…TPGK and VEHK…SGTE. A compositionally biased stretch (pro residues) spans 155-165; the sequence is PGSPPVSPGPL. Over residues 233 to 244 the composition is skewed to basic and acidic residues; that stretch reads VEHKSNQKERRS. Phosphoserine is present on residues Ser244 and Ser247.

Belongs to the RELT family. Interacts with RELT, RELL2 and OXSR1. Interacts with PLSCR1. In terms of processing, phosphorylated in vitro by OXSR1. Widely expressed. Expressed at highest levels in the placenta, skeletal muscle, spleen and testis.

The protein resides in the cell membrane. Induces activation of MAPK14/p38 cascade, when overexpressed. Induces apoptosis, when overexpressed. The protein is RELT-like protein 1 (RELL1) of Homo sapiens (Human).